Here is an 81-residue protein sequence, read N- to C-terminus: Acyl carrier protein (81 aa).

One can recognise a Carrier domain in the interval 3–78 (QEIFEKVKSI…AAVDYIEKEQ (76 aa)). O-(pantetheine 4'-phosphoryl)serine is present on Ser-38.

The protein belongs to the acyl carrier protein (ACP) family. Post-translationally, 4'-phosphopantetheine is transferred from CoA to a specific serine of apo-ACP by AcpS. This modification is essential for activity because fatty acids are bound in thioester linkage to the sulfhydryl of the prosthetic group.

It localises to the cytoplasm. It participates in lipid metabolism; fatty acid biosynthesis. Its function is as follows. Carrier of the growing fatty acid chain in fatty acid biosynthesis. The protein is Acyl carrier protein of Crocosphaera subtropica (strain ATCC 51142 / BH68) (Cyanothece sp. (strain ATCC 51142)).